Reading from the N-terminus, the 363-residue chain is Protein-arginine kinase (363 aa).

The Phosphagen kinase C-terminal domain maps to isoleucine 24–alanine 254. ATP-binding positions include serine 27–arginine 31, histidine 92, arginine 125, arginine 176–methionine 180, and arginine 207–glutamate 212. The RDXXRA motif of the pArg binding pocket involved in allosteric regulation signature appears at arginine 337 to alanine 342.

Belongs to the ATP:guanido phosphotransferase family.

It carries out the reaction L-arginyl-[protein] + ATP = N(omega)-phospho-L-arginyl-[protein] + ADP + H(+). Appears to be allosterically activated by the binding of pArg-containing polypeptides to the pArg-binding pocket localized in the C-terminal domain of McsB. Catalyzes the specific phosphorylation of arginine residues in a large number of proteins. Is part of the bacterial stress response system. Protein arginine phosphorylation has a physiologically important role and is involved in the regulation of many critical cellular processes, such as protein homeostasis, motility, competence, and stringent and stress responses, by regulating gene expression and protein activity. This chain is Protein-arginine kinase, found in Bacillus pumilus (strain SAFR-032).